We begin with the raw amino-acid sequence, 157 residues long: UPF0225 protein PSPPH_1399 (157 aa).

This sequence belongs to the UPF0225 family.

The chain is UPF0225 protein PSPPH_1399 from Pseudomonas savastanoi pv. phaseolicola (strain 1448A / Race 6) (Pseudomonas syringae pv. phaseolicola (strain 1448A / Race 6)).